A 179-amino-acid polypeptide reads, in one-letter code: GTP-dependent dephospho-CoA kinase (179 aa).

GTP is bound by residues Asp-55, Val-57, Asp-74, Lys-76, and Glu-128.

Belongs to the GTP-dependent DPCK family.

The catalysed reaction is 3'-dephospho-CoA + GTP = GDP + CoA + H(+). The protein operates within cofactor biosynthesis; coenzyme A biosynthesis. Catalyzes the GTP-dependent phosphorylation of the 3'-hydroxyl group of dephosphocoenzyme A to form coenzyme A (CoA). The chain is GTP-dependent dephospho-CoA kinase from Saccharolobus islandicus (strain M.16.4 / Kamchatka #3) (Sulfolobus islandicus).